Here is a 302-residue protein sequence, read N- to C-terminus: UDP-N-acetylenolpyruvoylglucosamine reductase (302 aa).

Residues 29 to 192 (KVGGPVDLLA…VAVTLQLSED (164 aa)) form the FAD-binding PCMH-type domain. Residue arginine 172 is part of the active site. Serine 221 functions as the Proton donor in the catalytic mechanism. Glutamate 291 is an active-site residue.

It belongs to the MurB family. The cofactor is FAD.

Its subcellular location is the cytoplasm. The catalysed reaction is UDP-N-acetyl-alpha-D-muramate + NADP(+) = UDP-N-acetyl-3-O-(1-carboxyvinyl)-alpha-D-glucosamine + NADPH + H(+). It participates in cell wall biogenesis; peptidoglycan biosynthesis. Its function is as follows. Cell wall formation. This chain is UDP-N-acetylenolpyruvoylglucosamine reductase, found in Trichlorobacter lovleyi (strain ATCC BAA-1151 / DSM 17278 / SZ) (Geobacter lovleyi).